The chain runs to 217 residues: MKFFVDTADVKDIRELNDLGLLDGVTTNPSLILKAGRDIVEVTKEICSIVEGPVSAEVTATEYSAMMKEAAALSKIADNICIKLPLTLDGLKACKALTSDGHQTNVTLCFSANQALLAAKAGATFVSPFIGRLDDIAVDGMDLIREIRHIYDNYGYETEILAASVRTVNHVKEAALIGADVVTAPPATLKALVKHPLTDKGLETFLADWAKTGQKIA.

Lys83 (schiff-base intermediate with substrate) is an active-site residue.

Belongs to the transaldolase family. Type 3B subfamily.

The protein localises to the cytoplasm. It catalyses the reaction D-sedoheptulose 7-phosphate + D-glyceraldehyde 3-phosphate = D-erythrose 4-phosphate + beta-D-fructose 6-phosphate. Its pathway is carbohydrate degradation; pentose phosphate pathway; D-glyceraldehyde 3-phosphate and beta-D-fructose 6-phosphate from D-ribose 5-phosphate and D-xylulose 5-phosphate (non-oxidative stage): step 2/3. Functionally, transaldolase is important for the balance of metabolites in the pentose-phosphate pathway. The sequence is that of Probable transaldolase from Sinorhizobium medicae (strain WSM419) (Ensifer medicae).